We begin with the raw amino-acid sequence, 207 residues long: MESESVKFGGPRELGGALDLITQYKLLPHHEFFCKRSLPESLSDAHYLHNLVGDTEIRKGEGMQLDQLIPNASLSSRDTNARIQPFVLDELKEAFELNDTAPVELPPAEKGAPTTVSKSKSESKDKDRKHRKHKDKKEKDREHKKHKHKHKDRIKDKDKDKDRDKKKEKSGHHDKKRKNNGTEDADDVQRHKKSKHKSSKLDEMGAM.

A disordered region spans residues 99-207; it reads DTAPVELPPA…SSKLDEMGAM (109 aa). A compositionally biased stretch (basic residues) spans 127-152; that stretch reads DRKHRKHKDKKEKDREHKKHKHKHKD. The span at 153-167 shows a compositional bias: basic and acidic residues; it reads RIKDKDKDKDRDKKK. A compositionally biased stretch (basic residues) spans 168 to 179; sequence EKSGHHDKKRKN.

The protein belongs to the plant Mediator complex subunit 19 family. In terms of assembly, component of the Mediator complex.

The protein localises to the nucleus. Functionally, component of the Mediator complex, a coactivator involved in the regulated transcription of nearly all RNA polymerase II-dependent genes. Mediator functions as a bridge to convey information from gene-specific regulatory proteins to the basal RNA polymerase II transcription machinery. The Mediator complex, having a compact conformation in its free form, is recruited to promoters by direct interactions with regulatory proteins and serves for the assembly of a functional preinitiation complex with RNA polymerase II and the general transcription factors. This is Probable mediator of RNA polymerase II transcription subunit 19b (MED19B) from Arabidopsis thaliana (Mouse-ear cress).